The primary structure comprises 357 residues: Ferrochelatase (357 aa).

Residues H193 and E272 each coordinate Fe cation.

This sequence belongs to the ferrochelatase family.

The protein resides in the cytoplasm. It catalyses the reaction heme b + 2 H(+) = protoporphyrin IX + Fe(2+). The protein operates within porphyrin-containing compound metabolism; protoheme biosynthesis; protoheme from protoporphyrin-IX: step 1/1. In terms of biological role, catalyzes the ferrous insertion into protoporphyrin IX. In Hyphomonas neptunium (strain ATCC 15444), this protein is Ferrochelatase.